The primary structure comprises 638 residues: Epithelial sodium channel subunit beta (638 aa).

The Cytoplasmic portion of the chain corresponds to 1-50 (MPVKKYLLKCLHRLQKGPGYTYKELLVWYCNNTNTHGPKRIICEGPKKKA). The chain crosses the membrane as a helical span at residues 51 to 71 (MWFLLTLLFACLVCWQWGVFI). Residues 72–530 (QTYLSWEVSV…GGQFGFWMGG (459 aa)) are Extracellular-facing. 9 disulfides stabilise this stretch: C98–C270, C182–C187, C194–C201, C247–C254, C359–C446, C384–C442, C388–C438, C397–C424, and C399–C413. N135 and N141 each carry an N-linked (GlcNAc...) asparagine glycan. The helical transmembrane segment at 531–551 (SVLCLIEFGEIIIDFIWITVI) threads the bilayer. Over 552 to 638 (KLVASCKGLR…MESDSEVEAI (87 aa)) the chain is Cytoplasmic. The disordered stretch occupies residues 598 to 620 (NAEVYPDQQTLPIPGTPPPNYDS). Positions 614-618 (PPPNY) match the PY motif; recruits WW domain-containing proteins and is thereby required for ubiquitination and inhibition of the channel by NEDD4 and NEDD4L motif. 2 positions are modified to phosphoserine: S631 and S633.

This sequence belongs to the amiloride-sensitive sodium channel (TC 1.A.6) family. SCNN1B subfamily. In terms of assembly, component of the heterotrimeric epithelial sodium channel (ENaC) composed of an alpha/SCNN1A, a beta/SCNN1B and a gamma/SCNN1G subunit. Interacts with WWP1 (via WW domains). Interacts with WWP2 (via WW domains). Interacts with the full-length immature form of PCSK9 (pro-PCSK9). Interacts (N-glycosylated) with BPIFA1; the interaction is direct and inhibits the proteolytic processing of SCNN1A and SCNN1G and the activation of ENaC. Ubiquitinated. Can be ubiquitinated at multiple sites and undergo monoubiquitination and polyubiquitination. Ubiquitination by NEDD4 or NEDD4L inhibits the ENaC channel through endocytosis, intracellular retention and degradation of its individual subunits. However, some studies could not confirm the ubiquitination of this subunit of the ENaC. Post-translationally, N-glycosylated. N-glycosylation is required for interaction with BPIFA1. In terms of processing, phosphorylated on serine and threonine residues. Aldosterone and insulin increase the basal level of phosphorylation. In terms of tissue distribution, expressed in lung and epididymis. In the caput region of the epididymis, expressed at the luminal and basolateral surfaces of the ducts and in the smooth muscle coat. In the caudal region of the epididymis, expressed along the luminal border but not continuously, in the smooth muscle coat, in the interstitial muscle tissue and in sperm in the caudal lumen.

It localises to the apical cell membrane. It is found in the cytoplasmic vesicle membrane. The enzyme catalyses Na(+)(in) = Na(+)(out). Originally identified and characterized by its inhibition by the diuretic drug amiloride. Its function is as follows. This is one of the three pore-forming subunits of the heterotrimeric epithelial sodium channel (ENaC), a critical regulator of sodium balance and fluid homeostasis. ENaC operates in epithelial tissues, where it mediates the electrodiffusion of sodium ions from extracellular fluid through the apical membrane of cells, with water following osmotically. It plays a key role in maintaining sodium homeostasis through electrogenic sodium reabsorption in the kidneys. This subunit is not essential for ENaC function in airway surface liquid homeostasis and proper mucus clearance. The protein is Epithelial sodium channel subunit beta of Rattus norvegicus (Rat).